Here is an 862-residue protein sequence, read N- to C-terminus: Rab GTPase-binding effector protein 1 (862 aa).

At Ala2 the chain carries N-acetylalanine. The stretch at 11–345 (DVSLQQRVAE…KKTDTEEEVK (335 aa)) forms a coiled coil. An N6-acetyllysine modification is found at Lys282. Positions 315–374 (ELKKKDQEEDEQQRVNKRKDNKKTDTEEEVKIPVVCALTQEESSTPLSNEEEHLDSTHGS) are disordered. Over residues 336-345 (KKTDTEEEVK) the composition is skewed to basic and acidic residues. Phosphoserine occurs at positions 374, 377, and 407. Phosphothreonine is present on Thr408. Phosphoserine is present on Ser410. Positions 534-816 (DMCSNYEKQL…LQTELDVSEQ (283 aa)) form a coiled coil.

It belongs to the rabaptin family. Heterodimer with RABGEF1. The heterodimer binds RAB4A and RAB5A that have been activated by GTP-binding. Interacts with TSC2. Interacts with GGA1 (via GAE domain), GGA2 (via GAE domain) and GGA3 (via GAE domain). Interacts with AP1G1 (via GAE domain). Interacts with AP1G2 (via GAE domain). Interacts with ECPAS. Interacts with KCNH1. Interacts with PKD1 (via C-terminal domain) and GGA1; the interactions recruit PKD1:PKD2 complex to GGA1 and ARL3 at trans-Golgi network. Interacts with KCNH1. Proteolytic cleavage by caspases in apoptotic cells causes loss of endosome fusion activity.

Its subcellular location is the cytoplasm. The protein resides in the early endosome. It localises to the recycling endosome. It is found in the cytoplasmic vesicle. In terms of biological role, rab effector protein acting as linker between gamma-adaptin, RAB4A and RAB5A. Involved in endocytic membrane fusion and membrane trafficking of recycling endosomes. Involved in KCNH1 channels trafficking to and from the cell membrane. Stimulates RABGEF1 mediated nucleotide exchange on RAB5A. Mediates the traffic of PKD1:PKD2 complex from the endoplasmic reticulum through the Golgi to the cilium. The sequence is that of Rab GTPase-binding effector protein 1 (Rabep1) from Mus musculus (Mouse).